Here is a 99-residue protein sequence, read N- to C-terminus: Acylphosphatase (99 aa).

Residues 5–97 (IRQVMVRGRV…YAGERFSILS (93 aa)) enclose the Acylphosphatase-like domain. Active-site residues include arginine 20 and asparagine 38.

This sequence belongs to the acylphosphatase family.

It catalyses the reaction an acyl phosphate + H2O = a carboxylate + phosphate + H(+). This is Acylphosphatase (acyP) from Rhodopseudomonas palustris (strain BisB5).